The chain runs to 236 residues: Small ribosomal subunit protein uS3 (236 aa).

The KH type-2 domain maps to 39–107 (IREVLEKQLK…EVHLNIVEVR (69 aa)). A disordered region spans residues 214–236 (ASERRALEGGDSGGGRSRRDDRG).

This sequence belongs to the universal ribosomal protein uS3 family. Part of the 30S ribosomal subunit. Forms a tight complex with proteins S10 and S14.

Its function is as follows. Binds the lower part of the 30S subunit head. Binds mRNA in the 70S ribosome, positioning it for translation. The sequence is that of Small ribosomal subunit protein uS3 from Parvibaculum lavamentivorans (strain DS-1 / DSM 13023 / NCIMB 13966).